The primary structure comprises 189 residues: Potassium-transporting ATPase KdpC subunit (189 aa).

The helical transmembrane segment at 10–30 (ITLVFCVFFSVFYILILWLFA) threads the bilayer.

It belongs to the KdpC family. The system is composed of three essential subunits: KdpA, KdpB and KdpC.

The protein resides in the cell inner membrane. In terms of biological role, part of the high-affinity ATP-driven potassium transport (or Kdp) system, which catalyzes the hydrolysis of ATP coupled with the electrogenic transport of potassium into the cytoplasm. This subunit acts as a catalytic chaperone that increases the ATP-binding affinity of the ATP-hydrolyzing subunit KdpB by the formation of a transient KdpB/KdpC/ATP ternary complex. In Bacteroides thetaiotaomicron (strain ATCC 29148 / DSM 2079 / JCM 5827 / CCUG 10774 / NCTC 10582 / VPI-5482 / E50), this protein is Potassium-transporting ATPase KdpC subunit.